A 399-amino-acid chain; its full sequence is Phosphoglycerate kinase (399 aa).

Substrate contacts are provided by residues 20–22 (DFN), R35, 58–61 (HLGR), R117, and R154. ATP is bound by residues K204, G295, E326, and 355–358 (GGDS).

This sequence belongs to the phosphoglycerate kinase family. In terms of assembly, monomer.

The protein resides in the cytoplasm. It carries out the reaction (2R)-3-phosphoglycerate + ATP = (2R)-3-phospho-glyceroyl phosphate + ADP. The protein operates within carbohydrate degradation; glycolysis; pyruvate from D-glyceraldehyde 3-phosphate: step 2/5. In Beutenbergia cavernae (strain ATCC BAA-8 / DSM 12333 / CCUG 43141 / JCM 11478 / NBRC 16432 / NCIMB 13614 / HKI 0122), this protein is Phosphoglycerate kinase.